Here is a 226-residue protein sequence, read N- to C-terminus: MNFLKSFPFFAFLYFGQYFVAVTHAATFDIVNKCTYTVWAAASPGGGRRLDSGQSWSINVNPGTVQARIWGRTNCNFDGSGRGNCETGDCNGMLECQGYGKAPNTLAEFALNQPNQDFVDISLVDGFNIPMEFSPTNGGCRNLRCTAPINEQCPAQLKTQGGCNNPCTVIKTNEYCCTNGPGSCGPTDLSRFFKERCPDAYSYPQDDPTSLFTCPSGTNYRVVFCP.

The signal sequence occupies residues 1–25 (MNFLKSFPFFAFLYFGQYFVAVTHA). 8 disulfides stabilise this stretch: C34/C225, C75/C85, C90/C96, C140/C214, C145/C197, C153/C163, C167/C176, and C177/C184.

This sequence belongs to the thaumatin family.

It is found in the vacuole. This is Pathogenesis-related protein R major form from Nicotiana tabacum (Common tobacco).